A 580-amino-acid chain; its full sequence is Phosphatase and actin regulator 1 (580 aa).

Phosphoserine is present on residues S67 and S78. T104 is modified (phosphothreonine). The Nuclear localization signal motif lies at 108 to 129 (RRRSKFANLGRIFKPWKWRKKK). An RPEL 1 repeat occupies 138–163 (AALERKISMRQSREELIKRGVLKEIY). Disordered regions lie at residues 330–350 (SEQR…SSDG) and 374–408 (DNKE…DDAS). Positions 337–348 (STSYHSSGLHSS) are enriched in low complexity. A compositionally biased stretch (basic and acidic residues) spans 374–383 (DNKENVPHEP). The span at 395-407 (EEEEEEEDEDDDA) shows a compositional bias: acidic residues. RPEL repeat units follow at residues 422–447 (DSLA…PRQT), 460–485 (TKLT…KPRN), and 498–523 (RRLT…IRFS). The interval 463–494 (TRRLSQRPTAEELEQRNILKPRNEQEEQEEKR) is disordered. S467 carries the post-translational modification Phosphoserine. Residues 471–494 (TAEELEQRNILKPRNEQEEQEEKR) show a composition bias toward basic and acidic residues. S505 is subject to Phosphoserine.

It belongs to the phosphatase and actin regulator family. As to quaternary structure, interacts (via RPEL repeats) with ACTA1 and PPP1CA; ACTA1 and PPP1CA compete for the same binding site.

The protein localises to the cytoplasm. It localises to the synapse. The protein resides in the nucleus. Its function is as follows. Binds actin monomers (G actin) and plays a role in multiple processes including the regulation of actin cytoskeleton dynamics, actin stress fibers formation, cell motility and survival, formation of tubules by endothelial cells, and regulation of PPP1CA activity. Involved in the regulation of cortical neuron migration and dendrite arborization. This is Phosphatase and actin regulator 1 (Phactr1) from Mus musculus (Mouse).